The following is a 357-amino-acid chain: NAD kinase 1 (357 aa).

Asp-68 (proton acceptor) is an active-site residue. Residues 68–69 (DG), Arg-73, 175–176 (ND), Arg-186, Asp-205, Ala-240, and Gln-275 contribute to the NAD(+) site.

This sequence belongs to the NAD kinase family. A divalent metal cation serves as cofactor.

Its subcellular location is the cytoplasm. It catalyses the reaction NAD(+) + ATP = ADP + NADP(+) + H(+). Functionally, involved in the regulation of the intracellular balance of NAD and NADP, and is a key enzyme in the biosynthesis of NADP. Catalyzes specifically the phosphorylation on 2'-hydroxyl of the adenosine moiety of NAD to yield NADP. This Streptomyces avermitilis (strain ATCC 31267 / DSM 46492 / JCM 5070 / NBRC 14893 / NCIMB 12804 / NRRL 8165 / MA-4680) protein is NAD kinase 1.